A 487-amino-acid chain; its full sequence is CUGBP Elav-like family member 1 (487 aa).

The residue at position 1 (Met-1) is an N-acetylmethionine. The residue at position 4 (Thr-4) is a Phosphothreonine. RRM domains follow at residues 16–99 and 108–188; these read IKMF…PADS and RKLF…FADT. Residue Lys-109 forms a Glycyl lysine isopeptide (Lys-Gly) (interchain with G-Cter in SUMO2) linkage. Phosphoserine occurs at positions 179 and 303. The tract at residues 277–310 is disordered; sequence TPSGTNALTTSSSPLSVLTSSAGSSPSSSSSNSV. Low complexity predominate over residues 283-310; the sequence is ALTTSSSPLSVLTSSAGSSPSSSSSNSV. The region spanning 402–480 is the RRM 3 domain; that stretch reads ANLFIYHLPQ…KRLKVQLKRS (79 aa).

Belongs to the CELF/BRUNOL family. Interacts with HNRNPH1; the interaction in RNA-dependent. Interacts with PARN. Component of an EIF2 complex at least composed of CELF1/CUGBP1, CALR, CALR3, EIF2S1, EIF2S2, HSP90B1 and HSPA5. Associates with polysomes.

It is found in the nucleus. Its subcellular location is the cytoplasm. Its function is as follows. RNA-binding protein implicated in the regulation of several post-transcriptional events. Involved in pre-mRNA alternative splicing, mRNA translation and stability. Mediates exon inclusion and/or exclusion in pre-mRNA that are subject to tissue-specific and developmentally regulated alternative splicing. Specifically activates exon 5 inclusion of cardiac isoforms of TNNT2 during heart remodeling at the juvenile to adult transition. Acts both as an activator and as a repressor of a pair of coregulated exons: promotes inclusion of the smooth muscle (SM) exon but exclusion of the non-muscle (NM) exon in actinin pre-mRNAs. Activates SM exon 5 inclusion by antagonizing the repressive effect of PTB. Promotes exclusion of exon 11 of the INSR pre-mRNA. Inhibits, together with HNRNPH1, insulin receptor (IR) pre-mRNA exon 11 inclusion in myoblast. Increases translation and controls the choice of translation initiation codon of CEBPB mRNA. Increases mRNA translation of CEBPB in aging liver. Increases translation of CDKN1A mRNA by antagonizing the repressive effect of CALR3. Mediates rapid cytoplasmic mRNA deadenylation. Recruits the deadenylase PARN to the poly(A) tail of EDEN-containing mRNAs to promote their deadenylation. Required for completion of spermatogenesis. Binds to (CUG)n triplet repeats in the 3'-UTR of transcripts such as DMPK and to Bruno response elements (BREs). Binds to muscle-specific splicing enhancer (MSE) intronic sites flanking the alternative exon 5 of TNNT2 pre-mRNA. Binds to AU-rich sequences (AREs or EDEN-like) localized in the 3'-UTR of JUN and FOS mRNAs. Binds to the IR RNA. Binds to the 5'-region of CDKN1A and CEBPB mRNAs. Binds with the 5'-region of CEBPB mRNA in aging liver. May be a specific regulator of miRNA biogenesis. Binds to primary microRNA pri-MIR140 and, with CELF2, negatively regulates the processing to mature miRNA. This chain is CUGBP Elav-like family member 1 (Celf1), found in Rattus norvegicus (Rat).